The sequence spans 276 residues: Omega-amidase NIT2 (276 aa).

Residues 4–248 (FRLSLVQFLV…ETVISADIDL (245 aa)) form the CN hydrolase domain. E43 serves as the catalytic Proton acceptor. K112 serves as the catalytic Proton donor. The active-site Nucleophile is the C153.

This sequence belongs to the carbon-nitrogen hydrolase superfamily. NIT1/NIT2 family. Homodimer.

The protein resides in the cytoplasm. It carries out the reaction 2-oxoglutaramate + H2O = 2-oxoglutarate + NH4(+). The enzyme catalyses 2-oxosuccinamate + H2O = oxaloacetate + NH4(+). Has omega-amidase activity. The role of omega-amidase is to remove potentially toxic intermediates by converting 2-oxoglutaramate and 2-oxosuccinamate to biologically useful 2-oxoglutarate and oxaloacetate, respectively. The protein is Omega-amidase NIT2 (nit2) of Xenopus tropicalis (Western clawed frog).